The chain runs to 829 residues: Ectonucleotide pyrophosphatase/phosphodiesterase C27A7.1 (829 aa).

A helical; Signal-anchor for type II membrane protein membrane pass occupies residues 54–74; that stretch reads VIGIAVLLLAMVVIVVIVLLL. T224 (nucleophile) is an active-site residue. N-linked (GlcNAc...) asparagine glycosylation is found at N296, N424, N514, N542, N582, N649, N733, and N748. A disulfide bond links C439 and C782.

Belongs to the nucleotide pyrophosphatase/phosphodiesterase family.

The protein localises to the membrane. Probable phosphodiesterase. This is Ectonucleotide pyrophosphatase/phosphodiesterase C27A7.1 from Caenorhabditis elegans.